A 424-amino-acid chain; its full sequence is Tyrosine--tRNA ligase (424 aa).

Tyrosine 37 provides a ligand contact to L-tyrosine. The 'HIGH' region signature appears at proline 42 to histidine 51. An N6-acetyllysine modification is found at lysine 144. Positions 175 and 179 each coordinate L-tyrosine. The 'KMSKS' region motif lies at lysine 235–threonine 239. Lysine 238 is an ATP binding site. The region spanning alanine 357–glycine 414 is the S4 RNA-binding domain.

The protein belongs to the class-I aminoacyl-tRNA synthetase family. TyrS type 1 subfamily. Homodimer.

Its subcellular location is the cytoplasm. It catalyses the reaction tRNA(Tyr) + L-tyrosine + ATP = L-tyrosyl-tRNA(Tyr) + AMP + diphosphate + H(+). Functionally, catalyzes the attachment of tyrosine to tRNA(Tyr) in a two-step reaction: tyrosine is first activated by ATP to form Tyr-AMP and then transferred to the acceptor end of tRNA(Tyr). The polypeptide is Tyrosine--tRNA ligase (Escherichia coli (strain K12 / DH10B)).